Reading from the N-terminus, the 833-residue chain is Glycerol-3-phosphate acyltransferase (833 aa).

The HXXXXD motif signature appears at 309–314 (CHRSHI).

It belongs to the GPAT/DAPAT family.

It localises to the cell inner membrane. It catalyses the reaction sn-glycerol 3-phosphate + an acyl-CoA = a 1-acyl-sn-glycero-3-phosphate + CoA. It participates in phospholipid metabolism; CDP-diacylglycerol biosynthesis; CDP-diacylglycerol from sn-glycerol 3-phosphate: step 1/3. This is Glycerol-3-phosphate acyltransferase from Pseudomonas syringae pv. syringae (strain B728a).